We begin with the raw amino-acid sequence, 252 residues long: Sulfate transporter CysZ (252 aa).

5 consecutive transmembrane segments (helical) span residues 29 to 49 (FVLL…FYIF), 66 to 86 (FLSW…LATF), 141 to 160 (LVYI…IPAL), 164 to 186 (VAPF…DYPF), and 212 to 232 (ALVS…PVAV).

The protein belongs to the CysZ family.

The protein localises to the cell inner membrane. High affinity, high specificity proton-dependent sulfate transporter, which mediates sulfate uptake. Provides the sulfur source for the cysteine synthesis pathway. The protein is Sulfate transporter CysZ of Vibrio atlanticus (strain LGP32) (Vibrio splendidus (strain Mel32)).